A 538-amino-acid chain; its full sequence is Bifunctional purine biosynthesis protein PurH (538 aa).

Residues 8-158 form the MGS-like domain; the sequence is IPAPDKVEIK…KNHAYVTTLT (151 aa).

Belongs to the PurH family.

It carries out the reaction (6R)-10-formyltetrahydrofolate + 5-amino-1-(5-phospho-beta-D-ribosyl)imidazole-4-carboxamide = 5-formamido-1-(5-phospho-D-ribosyl)imidazole-4-carboxamide + (6S)-5,6,7,8-tetrahydrofolate. The enzyme catalyses IMP + H2O = 5-formamido-1-(5-phospho-D-ribosyl)imidazole-4-carboxamide. It functions in the pathway purine metabolism; IMP biosynthesis via de novo pathway; 5-formamido-1-(5-phospho-D-ribosyl)imidazole-4-carboxamide from 5-amino-1-(5-phospho-D-ribosyl)imidazole-4-carboxamide (10-formyl THF route): step 1/1. The protein operates within purine metabolism; IMP biosynthesis via de novo pathway; IMP from 5-formamido-1-(5-phospho-D-ribosyl)imidazole-4-carboxamide: step 1/1. This chain is Bifunctional purine biosynthesis protein PurH, found in Rhizobium johnstonii (strain DSM 114642 / LMG 32736 / 3841) (Rhizobium leguminosarum bv. viciae).